Here is a 97-residue protein sequence, read N- to C-terminus: Large ribosomal subunit protein bL28 (97 aa).

This sequence belongs to the bacterial ribosomal protein bL28 family.

The chain is Large ribosomal subunit protein bL28 from Rickettsia typhi (strain ATCC VR-144 / Wilmington).